The following is a 305-amino-acid chain: Ribosomal RNA small subunit methyltransferase H (305 aa).

Residues 33–35 (GGY), aspartate 51, phenylalanine 82, aspartate 96, and glutamine 103 each bind S-adenosyl-L-methionine.

The protein belongs to the methyltransferase superfamily. RsmH family.

The protein resides in the cytoplasm. The catalysed reaction is cytidine(1402) in 16S rRNA + S-adenosyl-L-methionine = N(4)-methylcytidine(1402) in 16S rRNA + S-adenosyl-L-homocysteine + H(+). Specifically methylates the N4 position of cytidine in position 1402 (C1402) of 16S rRNA. The protein is Ribosomal RNA small subunit methyltransferase H of Rickettsia bellii (strain OSU 85-389).